Here is a 190-residue protein sequence, read N- to C-terminus: MKSTLIIFFTLCLSMAVMARHESYYGNTKPAKLNEEKVTRVRFYLHDTLSGQNPTAVRIAHANLTGGSASPVGFGSLFVIDDPLTVGPEKHSKEIGNGQGMYVSGCKDLSKFTIVMYADLAFTAGKFNGSSISIFSRNPVAEEVGEREIAIVGGRGKFRMARGFVKVKTNKIDMKTGDAVLRYDATVYHY.

The N-terminal stretch at 1–19 (MKSTLIIFFTLCLSMAVMA) is a signal peptide. Asn-63 and Asn-128 each carry an N-linked (GlcNAc...) asparagine glycan.

This sequence belongs to the plant dirigent protein family. Homodimer.

It is found in the secreted. Its subcellular location is the extracellular space. The protein localises to the apoplast. Functionally, dirigent proteins impart stereoselectivity on the phenoxy radical-coupling reaction, yielding optically active lignans from two molecules of coniferyl alcohol in the biosynthesis of lignans, flavonolignans, and alkaloids and thus plays a central role in plant secondary metabolism. The polypeptide is Dirigent protein 15 (DIR15) (Arabidopsis thaliana (Mouse-ear cress)).